The primary structure comprises 300 residues: Probable alpha-L-glutamate ligase (300 aa).

Residues 104–287 (LQLLARQGID…IASRMIAWIE (184 aa)) form the ATP-grasp domain. ATP is bound by residues lysine 141, 178–179 (EY), aspartate 187, and 211–213 (RSN). Mg(2+)-binding residues include aspartate 248, glutamate 260, and asparagine 262. Positions 248, 260, and 262 each coordinate Mn(2+).

This sequence belongs to the RimK family. The cofactor is Mg(2+). Mn(2+) is required as a cofactor.

The polypeptide is Probable alpha-L-glutamate ligase (Klebsiella pneumoniae (strain 342)).